The sequence spans 323 residues: Ribose-phosphate pyrophosphokinase 2 (323 aa).

ATP-binding positions include 43–45 (DGE) and 102–103 (RQ). The Mg(2+) site is built by histidine 136 and aspartate 177. Lysine 200 is a catalytic residue. D-ribose 5-phosphate is bound by residues arginine 202, aspartate 226, and 230 to 234 (DTAGT).

The protein belongs to the ribose-phosphate pyrophosphokinase family. Class I subfamily. Homohexamer. It depends on Mg(2+) as a cofactor.

The protein localises to the cytoplasm. It carries out the reaction D-ribose 5-phosphate + ATP = 5-phospho-alpha-D-ribose 1-diphosphate + AMP + H(+). It functions in the pathway metabolic intermediate biosynthesis; 5-phospho-alpha-D-ribose 1-diphosphate biosynthesis; 5-phospho-alpha-D-ribose 1-diphosphate from D-ribose 5-phosphate (route I): step 1/1. Its function is as follows. Involved in the biosynthesis of the central metabolite phospho-alpha-D-ribosyl-1-pyrophosphate (PRPP) via the transfer of pyrophosphoryl group from ATP to 1-hydroxyl of ribose-5-phosphate (Rib-5-P). The polypeptide is Ribose-phosphate pyrophosphokinase 2 (Enterococcus faecalis (strain ATCC 700802 / V583)).